Here is a 236-residue protein sequence, read N- to C-terminus: 2,3,4,5-tetrahydropyridine-2,6-dicarboxylate N-acetyltransferase (236 aa).

The protein belongs to the transferase hexapeptide repeat family. DapH subfamily.

It catalyses the reaction (S)-2,3,4,5-tetrahydrodipicolinate + acetyl-CoA + H2O = L-2-acetamido-6-oxoheptanedioate + CoA. It participates in amino-acid biosynthesis; L-lysine biosynthesis via DAP pathway; LL-2,6-diaminopimelate from (S)-tetrahydrodipicolinate (acetylase route): step 1/3. Functionally, catalyzes the transfer of an acetyl group from acetyl-CoA to tetrahydrodipicolinate. The protein is 2,3,4,5-tetrahydropyridine-2,6-dicarboxylate N-acetyltransferase of Bacillus velezensis (strain DSM 23117 / BGSC 10A6 / LMG 26770 / FZB42) (Bacillus amyloliquefaciens subsp. plantarum).